Consider the following 291-residue polypeptide: Quinol oxidase subunit 2 (291 aa).

An N-terminal signal peptide occupies residues 1 to 28 (MQLKKAFWKLASLLPXSLLLFLGGCDKK). The next 2 helical transmembrane spans lie at 49 to 69 (SFLL…VILI) and 91 to 111 (LEII…IPTV).

It belongs to the cytochrome c oxidase subunit 2 family.

It is found in the cell membrane. The enzyme catalyses 2 a quinol + O2 = 2 a quinone + 2 H2O. Its function is as follows. Catalyzes quinol oxidation with the concomitant reduction of oxygen to water. Subunit II transfers the electrons from a quinol to the binuclear center of the catalytic subunit I. This is Quinol oxidase subunit 2 from Bacillus cereus (strain ATCC 10987 / NRS 248).